The primary structure comprises 62 residues: Sperm protamine P1 (62 aa).

A disordered region spans residues methionine 1 to tyrosine 62.

Belongs to the protamine P1 family. Testis.

It is found in the nucleus. The protein resides in the chromosome. Functionally, protamines substitute for histones in the chromatin of sperm during the haploid phase of spermatogenesis. They compact sperm DNA into a highly condensed, stable and inactive complex. The protein is Sperm protamine P1 (PRM1) of Petrogale xanthopus (Yellow-footed rock wallaby).